Here is a 556-residue protein sequence, read N- to C-terminus: Zinc finger protein GLI1 (556 aa).

Disordered stretches follow at residues 57 to 83 (TEHP…KKRA), 133 to 178 (SLGY…TPAR), and 200 to 222 (KYPE…QDPL). A compositionally biased stretch (low complexity) spans 135-148 (GYQNPPGQQKGQGQ). 5 consecutive C2H2-type zinc fingers follow at residues 247–272 (TNCY…NNEH), 280–307 (FVCH…MRRH), 313–337 (HKCT…LRSH), 343–368 (YVCE…NRTH), and 374–399 (YICK…KTVH). Residues 295–303 (KAQYMLVVH) are interaction with DNA. Interaction with DNA regions lie at residues 357-362 (ASDRAK) and 387-393 (DPSSLRK). The segment at 387–492 (DPSSLRKHVK…VEMTGNTGGS (106 aa)) is disordered. Low complexity predominate over residues 454–472 (SKPQPSPGGQSSCSSDRSP).

The protein belongs to the GLI C2H2-type zinc-finger protein family.

The protein resides in the cytoplasm. Its subcellular location is the nucleus. Acts as a transcriptional activator. Binds to the DNA consensus sequence 5'-GACCACCCA-3'. May regulate the transcription of specific genes during normal development. May play a role in craniofacial development and digital development, as well as development of the central nervous system and gastrointestinal tract. Mediates SHH signaling. Plays a role in cell proliferation and differentiation via its role in SHH signaling. In Gallus gallus (Chicken), this protein is Zinc finger protein GLI1 (GLI1).